A 386-amino-acid polypeptide reads, in one-letter code: 3-hydroxyisobutyryl-CoA hydrolase, mitochondrial (386 aa).

The transit peptide at Met-1–Thr-32 directs the protein to the mitochondrion. Lys-55 and Lys-92 each carry N6-acetyllysine; alternate. Residues Lys-55 and Lys-92 each carry the N6-succinyllysine; alternate modification. Substrate-binding residues include Glu-121, Gly-146, Glu-169, and Asp-177. Lys-221 carries the N6-acetyllysine; alternate modification. Lys-221 bears the N6-succinyllysine; alternate mark. A Phosphoserine modification is found at Ser-234. N6-succinyllysine is present on Lys-257. N6-acetyllysine; alternate is present on Lys-297. Lys-297 carries the post-translational modification N6-succinyllysine; alternate. Lys-301 bears the N6-succinyllysine mark. Lys-353 is subject to N6-acetyllysine; alternate. Residue Lys-353 is modified to N6-succinyllysine; alternate. The residue at position 356 (Ser-356) is a Phosphoserine. N6-acetyllysine is present on residues Lys-360 and Lys-365. N6-succinyllysine is present on Lys-377.

The protein belongs to the enoyl-CoA hydratase/isomerase family. As to expression, highly expressed in liver and kidney, also detected in heart, muscle and brain (at protein level). Not detected in lung.

It is found in the mitochondrion. It catalyses the reaction 3-hydroxy-2-methylpropanoyl-CoA + H2O = 3-hydroxy-2-methylpropanoate + CoA + H(+). It participates in amino-acid degradation; L-valine degradation. In terms of biological role, hydrolyzes 3-hydroxyisobutyryl-CoA (HIBYL-CoA), a saline catabolite. Has high activity toward isobutyryl-CoA. Could be an isobutyryl-CoA dehydrogenase that functions in valine catabolism. Also hydrolyzes 3-hydroxypropanoyl-CoA. In Homo sapiens (Human), this protein is 3-hydroxyisobutyryl-CoA hydrolase, mitochondrial (HIBCH).